Reading from the N-terminus, the 115-residue chain is MNMLTVLSVNIALSTCLITIAFWLPQLNLYTEKANPYECGFDPMSSARLPFSMKFFLVAITFLLFDLEIALLLPLPWAIQMNNINTMMLTAFILVSVLALGLAYEWMQKGLEWTE.

3 consecutive transmembrane segments (helical) span residues 4-24 (LTVL…AFWL), 55-75 (FFLV…LLPL), and 87-107 (MMLT…YEWM).

It belongs to the complex I subunit 3 family. As to quaternary structure, core subunit of respiratory chain NADH dehydrogenase (Complex I) which is composed of 45 different subunits. Interacts with TMEM186. Interacts with TMEM242.

Its subcellular location is the mitochondrion inner membrane. The enzyme catalyses a ubiquinone + NADH + 5 H(+)(in) = a ubiquinol + NAD(+) + 4 H(+)(out). Functionally, core subunit of the mitochondrial membrane respiratory chain NADH dehydrogenase (Complex I) which catalyzes electron transfer from NADH through the respiratory chain, using ubiquinone as an electron acceptor. Essential for the catalytic activity of complex I. This chain is NADH-ubiquinone oxidoreductase chain 3, found in Peromyscus slevini (Slevin's mouse).